A 315-amino-acid polypeptide reads, in one-letter code: tRNA dimethylallyltransferase (315 aa).

Glycine 14 to threonine 21 is an ATP binding site. Threonine 16–threonine 21 serves as a coordination point for substrate. 3 interaction with substrate tRNA regions span residues aspartate 39–leucine 42, glutamine 163–arginine 167, and arginine 248–arginine 253.

This sequence belongs to the IPP transferase family. In terms of assembly, monomer. Requires Mg(2+) as cofactor.

The enzyme catalyses adenosine(37) in tRNA + dimethylallyl diphosphate = N(6)-dimethylallyladenosine(37) in tRNA + diphosphate. Functionally, catalyzes the transfer of a dimethylallyl group onto the adenine at position 37 in tRNAs that read codons beginning with uridine, leading to the formation of N6-(dimethylallyl)adenosine (i(6)A). The polypeptide is tRNA dimethylallyltransferase (Paraburkholderia xenovorans (strain LB400)).